The primary structure comprises 249 residues: Ribosomal RNA small subunit methyltransferase J (249 aa).

S-adenosyl-L-methionine is bound by residues 97–98 (RD), 113–114 (ER), and aspartate 167.

This sequence belongs to the methyltransferase superfamily. RsmJ family.

It localises to the cytoplasm. The enzyme catalyses guanosine(1516) in 16S rRNA + S-adenosyl-L-methionine = N(2)-methylguanosine(1516) in 16S rRNA + S-adenosyl-L-homocysteine + H(+). Functionally, specifically methylates the guanosine in position 1516 of 16S rRNA. The protein is Ribosomal RNA small subunit methyltransferase J of Aeromonas salmonicida (strain A449).